We begin with the raw amino-acid sequence, 140 residues long: Neuropeptide CCHamide-2 (140 aa).

Positions 1 to 22 (MAQMYLAVTIIALLAISHGVSA) are cleaved as a signal peptide. Cys26 and Cys33 form a disulfide bridge. Residue His37 is modified to Histidine amide. A propeptide spanning residues 41 to 140 (SGDTSAMDQL…PDDGYYIESL (100 aa)) is cleaved from the precursor.

Expressed in corpora cardiaca (CC), corpora allata (CA), antennal lobe (AL) and gnathal ganglion (GNG) (at protein level). Expression detected in few animals (at protein level).

The protein localises to the secreted. Ligand for the CCHamide-2 receptor CCHa2-R. The sequence is that of Neuropeptide CCHamide-2 from Agrotis ipsilon (Black cutworm moth).